Here is an 82-residue protein sequence, read N- to C-terminus: RNA-binding protein Hfq (82 aa).

The Sm domain maps to 11 to 71; that stretch reads DTFLNHVRKT…ISTIMPGAPI (61 aa).

It belongs to the Hfq family. In terms of assembly, homohexamer.

In terms of biological role, RNA chaperone that binds small regulatory RNA (sRNAs) and mRNAs to facilitate mRNA translational regulation in response to envelope stress, environmental stress and changes in metabolite concentrations. Also binds with high specificity to tRNAs. This chain is RNA-binding protein Hfq, found in Rhodopseudomonas palustris (strain HaA2).